We begin with the raw amino-acid sequence, 214 residues long: Small ribosomal subunit protein uS3c (214 aa).

A KH type-2 domain is found at 39–111 (IRTYLNKLAK…QITINVVEVE (73 aa)).

This sequence belongs to the universal ribosomal protein uS3 family. In terms of assembly, part of the 30S ribosomal subunit.

The protein resides in the plastid. It localises to the chloroplast. This Thalassiosira pseudonana (Marine diatom) protein is Small ribosomal subunit protein uS3c (rps3).